The sequence spans 77 residues: Small ribosomal subunit protein bS18 (77 aa).

It belongs to the bacterial ribosomal protein bS18 family. In terms of assembly, part of the 30S ribosomal subunit. Forms a tight heterodimer with protein bS6.

Its function is as follows. Binds as a heterodimer with protein bS6 to the central domain of the 16S rRNA, where it helps stabilize the platform of the 30S subunit. The sequence is that of Small ribosomal subunit protein bS18 from Lactobacillus helveticus (strain DPC 4571).